The following is a 673-amino-acid chain: Sodium/myo-inositol cotransporter 2 (673 aa).

The Extracellular portion of the chain corresponds to 1 to 27; sequence MESTTSSPQPPPSDALEAFPQKSMEPA. The helical transmembrane segment at 28-48 threads the bilayer; that stretch reads DIVVLVLYFLFVLAVGLWSTV. At 49-56 the chain is on the cytoplasmic side; that stretch reads RTKRDTVK. A helical transmembrane segment spans residues 57 to 77; that stretch reads GYFLAGGDMVWWPVGASLFAS. N78 is a topological domain (extracellular). A helical transmembrane segment spans residues 79-99; that stretch reads VGSGHFIGLAGSGAAVGISVA. Residues 100 to 102 are Cytoplasmic-facing; that stretch reads AYE. A helical transmembrane segment spans residues 103 to 123; it reads LNGLFSVLMLAWIFLPIYIAG. Over 124 to 180 the chain is Extracellular; that stretch reads QVTTMPEYLKRRFGGSRIPITLASIYPSTHSLTILQVDMYAGAIFIQQSLHLDLYLA. Residues 181-201 form a helical membrane-spanning segment; the sequence is IVGLLAVTALYTVAGGLAAVI. Residues 202–208 lie on the Cytoplasmic side of the membrane; that stretch reads YTDALQT. The helical transmembrane segment at 209 to 229 threads the bilayer; it reads VIMLIGAFILMGYSFAAVGGM. Topologically, residues 230-272 are extracellular; the sequence is EGLKDQYFLALASNRSENSSCGLPREDAFHIFRDPLTSDLPWP. The helical transmembrane segment at 273–293 threads the bilayer; the sequence is GILFGMSIPSLWYWCTDQVIV. The Cytoplasmic segment spans residues 294-308; that stretch reads QRSLAAKNLSHAKGG. A helical membrane pass occupies residues 309-329; it reads SLMAAYLKVLPLFLMVFPGMV. Residues 330-375 are Extracellular-facing; the sequence is SRILFPDQVACAHPDICQRVCSNPSGCSDIAYPKLVLELLPTGLRG. A helical membrane pass occupies residues 376–396; sequence LMMAVMVAALMSSLTSIFNSA. The Cytoplasmic segment spans residues 397-418; it reads STIFTMDLWHHIRPRASERELM. The chain crosses the membrane as a helical span at residues 419 to 439; it reads IVGRVFVLALVLVSILWIPVV. Topologically, residues 440-446 are extracellular; it reads QASQGGQ. The chain crosses the membrane as a helical span at residues 447 to 467; that stretch reads LFIYIQSISSYLQPPVAVVFI. At 468 to 479 the chain is on the cytoplasmic side; the sequence is MGCFWKRTNEKG. The helical transmembrane segment at 480 to 500 threads the bilayer; sequence AFSGLILGLLLGLVRLILDFV. Topologically, residues 501–521 are extracellular; it reads YVQPRCDQPDDRPAVVKDVHY. A helical membrane pass occupies residues 522–542; the sequence is LYFSMILSSTTLITVFTVSWF. The Cytoplasmic portion of the chain corresponds to 543–652; that stretch reads TETPSKEMVS…SLEENPLVKT (110 aa). Residues 653 to 673 traverse the membrane as a helical segment; the sequence is LLDVNCIVCISCAIFLWGYFA.

It belongs to the sodium:solute symporter (SSF) (TC 2.A.21) family. In terms of tissue distribution, expressed in kidney and small intestine.

It is found in the membrane. The protein resides in the apical cell membrane. The catalysed reaction is myo-inositol(out) + 2 Na(+)(out) = myo-inositol(in) + 2 Na(+)(in). The enzyme catalyses 1D-chiro-inositol(out) + 2 Na(+)(out) = 1D-chiro-inositol(in) + 2 Na(+)(in). It carries out the reaction D-glucose(out) + 2 Na(+)(out) = D-glucose(in) + 2 Na(+)(in). It catalyses the reaction D-xylose(out) + 2 Na(+)(out) = D-xylose(in) + 2 Na(+)(in). MI transport activity inhibited by D-chiro-inositol (DCI), phlorizin (Pz) and sodium (Na(+)). Insulin increases D-chiro-inositol uptake. Involved in the sodium-dependent cotransport of myo-inositol (MI) with a Na(+):MI stoichiometry of 2:1. Exclusively responsible for apical MI transport and absorption in intestine. Can also transport D-chiro-inositol (DCI) but not L-fucose. Exhibits stereospecific cotransport of both D-glucose and D-xylose. May induce apoptosis through the TNF-alpha, PDCD1 pathway. May play a role in the regulation of MI concentration in serum, involving reabsorption in at least the proximal tubule of the kidney. The sequence is that of Sodium/myo-inositol cotransporter 2 from Rattus norvegicus (Rat).